The primary structure comprises 424 residues: MLDIKRIRTDFEAVAEKLATRGVDAAVLNEMKEIDAKRRNILVKVETLKAERNTVSAEIAQAKRNKENTDDKIAAMQNLSAEVKALDAELAEIDAKLTEFTTTLPNIPADSVPVGADEDDNVEVRRWGTPREFDFEPKAHWDLGEDLGILDWERGGKVTGARFLFYKGLGARLERAIYNFMLDEHGKEGYTEVITPYIVNHDSMFGTGQYPKFKEDTFELSDTNFVLIPTAEVPLTNYYRDEILDGKDLPIYFTAMSPSFRSEAGSAGRDTRGLIRLHQFHKVEMVKFAKPEESYEELEKMTANAENILQKLNLPYRVVALSTGDMGFSAAKTYDLEVWIPAQNNYREISSCSNTEDFQARRAQIRYRDEADGKVKLLHTLNGSGLAVGRTVAAILENYQNEDGSVTIPEALRPYMGGAEVIKP.

An L-serine-binding site is contributed by 230 to 232 (TAE). 261–263 (RSE) lines the ATP pocket. Residue E284 coordinates L-serine. An ATP-binding site is contributed by 348–351 (EISS). S384 lines the L-serine pocket.

The protein belongs to the class-II aminoacyl-tRNA synthetase family. Type-1 seryl-tRNA synthetase subfamily. In terms of assembly, homodimer. The tRNA molecule binds across the dimer.

It is found in the cytoplasm. It catalyses the reaction tRNA(Ser) + L-serine + ATP = L-seryl-tRNA(Ser) + AMP + diphosphate + H(+). The catalysed reaction is tRNA(Sec) + L-serine + ATP = L-seryl-tRNA(Sec) + AMP + diphosphate + H(+). The protein operates within aminoacyl-tRNA biosynthesis; selenocysteinyl-tRNA(Sec) biosynthesis; L-seryl-tRNA(Sec) from L-serine and tRNA(Sec): step 1/1. Its function is as follows. Catalyzes the attachment of serine to tRNA(Ser). Is also able to aminoacylate tRNA(Sec) with serine, to form the misacylated tRNA L-seryl-tRNA(Sec), which will be further converted into selenocysteinyl-tRNA(Sec). The chain is Serine--tRNA ligase from Streptococcus pneumoniae serotype 4 (strain ATCC BAA-334 / TIGR4).